Here is a 290-residue protein sequence, read N- to C-terminus: ATP synthase gamma chain (290 aa).

It belongs to the ATPase gamma chain family. As to quaternary structure, F-type ATPases have 2 components, CF(1) - the catalytic core - and CF(0) - the membrane proton channel. CF(1) has five subunits: alpha(3), beta(3), gamma(1), delta(1), epsilon(1). CF(0) has four main subunits: a, b, b' and c.

It is found in the cellular chromatophore membrane. In terms of biological role, produces ATP from ADP in the presence of a proton gradient across the membrane. The gamma chain is believed to be important in regulating ATPase activity and the flow of protons through the CF(0) complex. The chain is ATP synthase gamma chain from Rhodobacter capsulatus (Rhodopseudomonas capsulata).